Here is a 242-residue protein sequence, read N- to C-terminus: Small ribosomal subunit protein uS3 (242 aa).

Residues 39–109 (IRQYVEKNLA…QIRINVIEVA (71 aa)) form the KH type-2 domain. Positions 220–242 (VPAQAPRRQQRRRQQFEDRSSEG) are disordered. Basic and acidic residues predominate over residues 233–242 (QQFEDRSSEG).

Belongs to the universal ribosomal protein uS3 family. Part of the 30S ribosomal subunit. Forms a tight complex with proteins S10 and S14.

Binds the lower part of the 30S subunit head. Binds mRNA in the 70S ribosome, positioning it for translation. This Microcystis aeruginosa (strain NIES-843 / IAM M-2473) protein is Small ribosomal subunit protein uS3.